A 282-amino-acid polypeptide reads, in one-letter code: Ermin (282 aa).

Polar residues-rich tracts occupy residues 1 to 12 (MTDTPVTLSGSE) and 21 to 30 (NGQQPSSQTR). The disordered stretch occupies residues 1–71 (MTDTPVTLSG…NSKGNVLPRG (71 aa)). A phosphoserine mark is found at S72, S212, S224, S228, and S231. Residues 212 to 224 (SPLKEESLAREDS) are compositionally biased toward basic and acidic residues. The interval 212 to 246 (SPLKEESLAREDSPLSSPSSQPGTPDEQLVLGKKG) is disordered. Residues 225 to 234 (PLSSPSSQPG) are compositionally biased toward polar residues. At T235 the chain carries Phosphothreonine. The tract at residues 263-282 (KIRKGNTKQRIDEFESMMHL) is binds actin.

As to quaternary structure, binds actin. Expressed specifically by the oligodendrocytes. Highest expression seen in the spinal cord followed by brainstem, cerebellum, thalamus, and hypothalamus. In the myelin sheath, found mainly in the abaxon and the lateral few terminal loops. Its apposition to the myelinated axon, through the latter, defines an axonal subregion, termed juxtanode, at the Ranvier node-paranode junction.

It is found in the cytoplasm. The protein resides in the cytoskeleton. Plays a role in cytoskeletal rearrangements during the late wrapping and/or compaction phases of myelinogenesis as well as in maintenance and stability of myelin sheath in the adult. May play an important role in late-stage oligodendroglia maturation, myelin/Ranvier node formation during CNS development, and in the maintenance and plasticity of related structures in the mature CNS. The sequence is that of Ermin (Ermn) from Rattus norvegicus (Rat).